We begin with the raw amino-acid sequence, 89 residues long: MAHKKAGGSSRNGRDSAGRRLGVKKFGGQDVIGGNIIVRQRGTKVYPGVNVGMGKDHTLFATADGRVRFHDGKLGRKYVSVDMMAEAAE.

The tract at residues 1 to 22 (MAHKKAGGSSRNGRDSAGRRLG) is disordered.

It belongs to the bacterial ribosomal protein bL27 family.

In Sphingopyxis alaskensis (strain DSM 13593 / LMG 18877 / RB2256) (Sphingomonas alaskensis), this protein is Large ribosomal subunit protein bL27.